The chain runs to 322 residues: Phosphatidylserine decarboxylase proenzyme (322 aa).

Residues aspartate 90, histidine 147, and serine 254 each act as charge relay system; for autoendoproteolytic cleavage activity in the active site. Residue serine 254 is the Schiff-base intermediate with substrate; via pyruvic acid; for decarboxylase activity of the active site. Serine 254 is modified (pyruvic acid (Ser); by autocatalysis). The tract at residues 295–322 is disordered; that stretch reads VEPAPLPTEEIKAEHDASPLVDNKKDDT. Positions 303 to 322 are enriched in basic and acidic residues; that stretch reads EEIKAEHDASPLVDNKKDDT.

The protein belongs to the phosphatidylserine decarboxylase family. PSD-B subfamily. Prokaryotic type I sub-subfamily. As to quaternary structure, heterodimer of a large membrane-associated beta subunit and a small pyruvoyl-containing alpha subunit. Pyruvate serves as cofactor. In terms of processing, is synthesized initially as an inactive proenzyme. Formation of the active enzyme involves a self-maturation process in which the active site pyruvoyl group is generated from an internal serine residue via an autocatalytic post-translational modification. Two non-identical subunits are generated from the proenzyme in this reaction, and the pyruvate is formed at the N-terminus of the alpha chain, which is derived from the carboxyl end of the proenzyme. The autoendoproteolytic cleavage occurs by a canonical serine protease mechanism, in which the side chain hydroxyl group of the serine supplies its oxygen atom to form the C-terminus of the beta chain, while the remainder of the serine residue undergoes an oxidative deamination to produce ammonia and the pyruvoyl prosthetic group on the alpha chain. During this reaction, the Ser that is part of the protease active site of the proenzyme becomes the pyruvoyl prosthetic group, which constitutes an essential element of the active site of the mature decarboxylase.

It is found in the cell membrane. The enzyme catalyses a 1,2-diacyl-sn-glycero-3-phospho-L-serine + H(+) = a 1,2-diacyl-sn-glycero-3-phosphoethanolamine + CO2. It functions in the pathway phospholipid metabolism; phosphatidylethanolamine biosynthesis; phosphatidylethanolamine from CDP-diacylglycerol: step 2/2. Its function is as follows. Catalyzes the formation of phosphatidylethanolamine (PtdEtn) from phosphatidylserine (PtdSer). This is Phosphatidylserine decarboxylase proenzyme from Salmonella agona (strain SL483).